The chain runs to 153 residues: Insulin-like growth factor 1 (153 aa).

The segment at 49 to 77 (GPETLCGAELVDALQFVCGDRGFYFNKPT) is b. 3 cysteine pairs are disulfide-bonded: C54/C96, C66/C109, and C95/C100. Positions 78–89 (GYGSSSRRAPQT) are c. The segment at 90 to 110 (GIVDECCFRSCDLRRLEMYCA) is a. The segment at 111–118 (PLKPAKSA) is d. Positions 119 to 153 (RSVRAQRHTDMPKAQKEVHLKNTSRGSSGNKNYRM) are cleaved as a propeptide — e peptide. The interval 120–153 (SVRAQRHTDMPKAQKEVHLKNTSRGSSGNKNYRM) is disordered. The span at 125-138 (RHTDMPKAQKEVHL) shows a compositional bias: basic and acidic residues. Polar residues predominate over residues 139-153 (KNTSRGSSGNKNYRM).

It belongs to the insulin family. As to quaternary structure, forms a ternary complex with IGFR1 and ITGAV:ITGB3. Forms a ternary complex with IGFR1 and ITGA6:ITGB4. Forms a ternary complex with IGFBP3 and ALS.

The protein localises to the secreted. Its function is as follows. The insulin-like growth factors, isolated from plasma, are structurally and functionally related to insulin but have a much higher growth-promoting activity. May be a physiological regulator of [1-14C]-2-deoxy-D-glucose (2DG) transport and glycogen synthesis in osteoblasts. Stimulates glucose transport in bone-derived osteoblastic (PyMS) cells and is effective at much lower concentrations than insulin, not only regarding glycogen and DNA synthesis but also with regard to enhancing glucose uptake. May play a role in synapse maturation. Ca(2+)-dependent exocytosis of IGF1 is required for sensory perception of smell in the olfactory bulb. Acts as a ligand for IGF1R. Binds to the alpha subunit of IGF1R, leading to the activation of the intrinsic tyrosine kinase activity which autophosphorylates tyrosine residues in the beta subunit thus initiating a cascade of down-stream signaling events leading to activation of the PI3K-AKT/PKB and the Ras-MAPK pathways. Binds to integrins ITGAV:ITGB3 and ITGA6:ITGB4. Its binding to integrins and subsequent ternary complex formation with integrins and IGFR1 are essential for IGF1 signaling. Induces the phosphorylation and activation of IGFR1, MAPK3/ERK1, MAPK1/ERK2 and AKT1. As part of the MAPK/ERK signaling pathway, acts as a negative regulator of apoptosis in cardiomyocytes via promotion of STUB1/CHIP-mediated ubiquitination and degradation of ICER-type isoforms of CREM. This chain is Insulin-like growth factor 1, found in Sus scrofa (Pig).